The chain runs to 96 residues: UPF0125 protein YfjF (96 aa).

The protein belongs to the UPF0125 (RnfH) family.

This chain is UPF0125 protein YfjF (yfjF), found in Escherichia coli O157:H7.